A 272-amino-acid polypeptide reads, in one-letter code: Putative hydro-lyase BBta_2883 (272 aa).

It belongs to the D-glutamate cyclase family.

The protein is Putative hydro-lyase BBta_2883 of Bradyrhizobium sp. (strain BTAi1 / ATCC BAA-1182).